Consider the following 439-residue polypeptide: Ornithine aminotransferase, mitochondrial (439 aa).

The transit peptide at 1–35 (MLSKLASLQTVAALRRGLRTSVASATSVATKKTEQ) directs the protein to the mitochondrion. Residues Lys-49 and Lys-66 each carry the N6-acetyllysine modification. At Lys-102 the chain carries N6-succinyllysine. Position 107 is an N6-acetyllysine; alternate (Lys-107). Lys-107 is modified (N6-succinyllysine; alternate). The residue at position 292 (Lys-292) is an N6-(pyridoxal phosphate)lysine. Lys-362 is modified (N6-acetyllysine; alternate). At Lys-362 the chain carries N6-succinyllysine; alternate. An N6-acetyllysine mark is found at Lys-386 and Lys-392. The residue at position 405 (Lys-405) is an N6-acetyllysine; alternate. An N6-succinyllysine; alternate modification is found at Lys-405. Position 421 is an N6-acetyllysine (Lys-421).

In terms of assembly, homohexamer. Pyridoxal 5'-phosphate is required as a cofactor. As to expression, expressed in the head and flagellum of epididymal sperm but not in testicular sperm (at protein level).

It localises to the mitochondrion matrix. The enzyme catalyses L-ornithine + 2-oxoglutarate = L-glutamate 5-semialdehyde + L-glutamate. It functions in the pathway amino-acid biosynthesis; L-proline biosynthesis; L-glutamate 5-semialdehyde from L-ornithine: step 1/1. In terms of biological role, catalyzes the reversible interconversion of L-ornithine and 2-oxoglutarate to L-glutamate semialdehyde and L-glutamate. The chain is Ornithine aminotransferase, mitochondrial (Oat) from Rattus norvegicus (Rat).